The following is a 238-amino-acid chain: 15,16-dihydrobiliverdin:ferredoxin oxidoreductase (238 aa).

The protein belongs to the HY2 family.

It carries out the reaction 15,16-dihydrobiliverdin + oxidized 2[4Fe-4S]-[ferredoxin] = biliverdin IXalpha + reduced 2[4Fe-4S]-[ferredoxin] + 2 H(+). Its function is as follows. Catalyzes the two-electron reduction of biliverdin IX-alpha at the C15 methine bridge. This is 15,16-dihydrobiliverdin:ferredoxin oxidoreductase from Prochlorococcus marinus (strain NATL2A).